The primary structure comprises 176 residues: RNA pyrophosphohydrolase (176 aa).

A Nudix hydrolase domain is found at 6-149; it reads GYRPNVGIVI…KRDVYRRVMK (144 aa). Residues 38 to 59 carry the Nudix box motif; that stretch reads GGINPGESAEQAMYRELFEEVG.

It belongs to the Nudix hydrolase family. RppH subfamily. Requires a divalent metal cation as cofactor.

In terms of biological role, accelerates the degradation of transcripts by removing pyrophosphate from the 5'-end of triphosphorylated RNA, leading to a more labile monophosphorylated state that can stimulate subsequent ribonuclease cleavage. This chain is RNA pyrophosphohydrolase, found in Escherichia fergusonii (strain ATCC 35469 / DSM 13698 / CCUG 18766 / IAM 14443 / JCM 21226 / LMG 7866 / NBRC 102419 / NCTC 12128 / CDC 0568-73).